We begin with the raw amino-acid sequence, 430 residues long: Enolase (430 aa).

Gln-163 contributes to the (2R)-2-phosphoglycerate binding site. The active-site Proton donor is Glu-205. The Mg(2+) site is built by Asp-242, Glu-285, and Asp-312. (2R)-2-phosphoglycerate is bound by residues Lys-337, Arg-366, Ser-367, and Lys-388. Lys-337 serves as the catalytic Proton acceptor.

This sequence belongs to the enolase family. Requires Mg(2+) as cofactor.

Its subcellular location is the cytoplasm. It is found in the secreted. The protein resides in the cell surface. It catalyses the reaction (2R)-2-phosphoglycerate = phosphoenolpyruvate + H2O. The protein operates within carbohydrate degradation; glycolysis; pyruvate from D-glyceraldehyde 3-phosphate: step 4/5. Its function is as follows. Catalyzes the reversible conversion of 2-phosphoglycerate (2-PG) into phosphoenolpyruvate (PEP). It is essential for the degradation of carbohydrates via glycolysis. In Bifidobacterium animalis subsp. lactis (strain AD011), this protein is Enolase.